Here is a 514-residue protein sequence, read N- to C-terminus: ATP synthase subunit alpha (514 aa).

Residue 170–177 (GDRQIGKT) coordinates ATP.

This sequence belongs to the ATPase alpha/beta chains family. In terms of assembly, F-type ATPases have 2 components, CF(1) - the catalytic core - and CF(0) - the membrane proton channel. CF(1) has five subunits: alpha(3), beta(3), gamma(1), delta(1), epsilon(1). CF(0) has three main subunits: a(1), b(2) and c(9-12). The alpha and beta chains form an alternating ring which encloses part of the gamma chain. CF(1) is attached to CF(0) by a central stalk formed by the gamma and epsilon chains, while a peripheral stalk is formed by the delta and b chains.

The protein resides in the cell inner membrane. It catalyses the reaction ATP + H2O + 4 H(+)(in) = ADP + phosphate + 5 H(+)(out). Its function is as follows. Produces ATP from ADP in the presence of a proton gradient across the membrane. The alpha chain is a regulatory subunit. This chain is ATP synthase subunit alpha, found in Marinobacter nauticus (strain ATCC 700491 / DSM 11845 / VT8) (Marinobacter aquaeolei).